We begin with the raw amino-acid sequence, 202 residues long: LexA repressor (202 aa).

The H-T-H motif DNA-binding region spans 28–48 (RAEIAQRLGFRSPNAAEEHLK). Catalysis depends on for autocatalytic cleavage activity residues Ser-119 and Lys-156.

Belongs to the peptidase S24 family. As to quaternary structure, homodimer.

It carries out the reaction Hydrolysis of Ala-|-Gly bond in repressor LexA.. In terms of biological role, represses a number of genes involved in the response to DNA damage (SOS response), including recA and lexA. Binds to the 16 bp palindromic sequence 5'-CTGTATATATATACAG-3'. In the presence of single-stranded DNA, RecA interacts with LexA causing an autocatalytic cleavage which disrupts the DNA-binding part of LexA, leading to derepression of the SOS regulon and eventually DNA repair. The polypeptide is LexA repressor (Klebsiella pneumoniae (strain 342)).